We begin with the raw amino-acid sequence, 125 residues long: Large ribosomal subunit protein bL12 (125 aa).

Belongs to the bacterial ribosomal protein bL12 family. In terms of assembly, homodimer. Part of the 50S ribosomal subunit; present in 6 copies per ribosome. Forms part of the ribosomal stalk which helps the ribosome interact with GTP-bound translation factors. Forms a heptameric L10(L12)2(L12)2(L12)2 complex, where L10 forms an elongated spine to which 3 L12 dimers bind in a sequential fashion.

In terms of biological role, forms part of the ribosomal stalk which helps the ribosome interact with GTP-bound translation factors. Is thus essential for accurate translation. The chain is Large ribosomal subunit protein bL12 from Agrobacterium fabrum (strain C58 / ATCC 33970) (Agrobacterium tumefaciens (strain C58)).